A 67-amino-acid chain; its full sequence is uncharacterized protein (67 aa).

This is an uncharacterized protein from Lymantria dispar multicapsid nuclear polyhedrosis virus (LdMNPV).